The following is a 280-amino-acid chain: Virginiamycin B lyase (280 aa).

Residue histidine 215 participates in substrate binding. Mg(2+) is bound at residue glutamate 254. Histidine 256 acts as the Proton acceptor in catalysis. Residue glutamate 271 coordinates Mg(2+).

The protein belongs to the Vgb family. Monomer. It depends on Mg(2+) as a cofactor.

Inactivates the type B streptogramin antibiotics by linearizing the lactone ring at the ester linkage, generating a free phenylglycine carboxylate and converting the threonyl moiety into 2-amino-butenoic acid. The sequence is that of Virginiamycin B lyase from Mycobacterium sp. (strain KMS).